Reading from the N-terminus, the 115-residue chain is Urease subunit beta (115 aa).

It belongs to the urease beta subunit family. Heterotrimer of UreA (gamma), UreB (beta) and UreC (alpha) subunits. Three heterotrimers associate to form the active enzyme.

It is found in the cytoplasm. It catalyses the reaction urea + 2 H2O + H(+) = hydrogencarbonate + 2 NH4(+). Its pathway is nitrogen metabolism; urea degradation; CO(2) and NH(3) from urea (urease route): step 1/1. This is Urease subunit beta from Arthrobacter sp. (strain FB24).